The chain runs to 414 residues: Protein PHLOEM PROTEIN 2-LIKE A10 (414 aa).

The next 2 helical transmembrane spans lie at 20 to 40 and 379 to 399; these read WLIF…VYHL and YVGA…LHII.

The protein resides in the membrane. This is Protein PHLOEM PROTEIN 2-LIKE A10 (PP2A10) from Arabidopsis thaliana (Mouse-ear cress).